Reading from the N-terminus, the 431-residue chain is Glutamate--tRNA ligase 1 (431 aa).

A 'HIGH' region motif is present at residues 6 to 16 (PSPTGDMHIGN). Positions 235-239 (KMSKR) match the 'KMSKS' region motif. Residue lysine 238 participates in ATP binding.

The protein belongs to the class-I aminoacyl-tRNA synthetase family. Glutamate--tRNA ligase type 1 subfamily. As to quaternary structure, monomer.

The protein resides in the cytoplasm. It carries out the reaction tRNA(Glu) + L-glutamate + ATP = L-glutamyl-tRNA(Glu) + AMP + diphosphate. Functionally, catalyzes the attachment of glutamate to tRNA(Glu) in a two-step reaction: glutamate is first activated by ATP to form Glu-AMP and then transferred to the acceptor end of tRNA(Glu). In Campylobacter concisus (strain 13826), this protein is Glutamate--tRNA ligase 1.